The primary structure comprises 1051 residues: Ubiquitin-activating enzyme E1 1 (1051 aa).

2 consecutive repeat copies span residues 56 to 194 (GRET…GSVF) and 453 to 605 (GSKL…QMVI). The 2 approximate repeats stretch occupies residues 56 to 605 (GRETMKRLFG…GAKCNTQMVI (550 aa)). ATP contacts are provided by residues alanine 472, aspartate 498, arginine 509, lysine 522, and 570 to 571 (DN). Cysteine 626 functions as the Glycyl thioester intermediate in the catalytic mechanism.

This sequence belongs to the ubiquitin-activating E1 family. In terms of assembly, monomer. The N-terminus is blocked.

The catalysed reaction is ATP + ubiquitin + [E1 ubiquitin-activating enzyme]-L-cysteine = AMP + diphosphate + S-ubiquitinyl-[E1 ubiquitin-activating enzyme]-L-cysteine.. Its pathway is protein modification; protein ubiquitination. Activates ubiquitin by first adenylating its C-terminal glycine residue with ATP, and thereafter linking this residue to the side chain of a cysteine residue in E1, yielding a ubiquitin-E1 thioester and free AMP. This is Ubiquitin-activating enzyme E1 1 from Triticum aestivum (Wheat).